Reading from the N-terminus, the 772-residue chain is MILSLNLLHKISPKLKKIPLNELCAALMDLGCEVETINSIKPSTNLVFAKVLEKTRHPNANHLNLVKVKANQKVYEIVCGANNFSVHNWVVLAKLNAELANGLKITPRELRGYVSNGMLCAYSEINPQATSFLTSTDLDGILVLDDNYDHYKTPNQIFNLDDVILDLSIPSNRNDLNGYFWIAKELCAYFDFEYVVDATINHRPHKEIIDVRILSDDVNSYGIIEVKNIQNYILKWNTKSILINNQIKVLNNFADNMNFLTLLTANPLHAFDARKISGQIVVKNAEEDAILLGLDQKEYLIKKGDLIIVDDQKILALAGIIGSNDSKIDATSTTAYIECANFNPMLIANTARRLKINTAAAMRFSKPLTNYVTKVTLKKLLANFKSDAKLIYYFKHSVHNVIKNKINQVSDFVGAEIDLDTAQTFLKRLGYKINKSNLITPSHRYDVLNEFDVYEDIMKKISIQEIKPQPISFDILNFENNLAYDFEKKVSDFLVDQGLFECKTYNLKNQTQAHEFNFFNFKQAYEINNPTSNMRSHLKLNNLNSLLEVLEYNQNQKNELENIFEISKINPVDSSQQTVLSIILCKPLINSKINDSLIVNNFVTTKALLHALLTKLNIDYAYDKNHVVNELYDNNQLALINANKQVFGFIGQLKNQVKKTYGLSNDIFIINLNLTSYLNQKQVITKVIKPSMYHDVIRDISVKLASDVDLNNIIANIKKIKNIRKVEISDLYIKDDGIIYTFKYYINDHLSNLSSEQIIIIEQEVNNYLKQF.

The tRNA-binding domain maps to 40 to 158; it reads IKPSTNLVFA…DHYKTPNQIF (119 aa). Residues 397–468 form the B5 domain; it reads SVHNVIKNKI…KKISIQEIKP (72 aa). Mg(2+) is bound by residues D446, D452, E455, and D456. In terms of domain architecture, FDX-ACB spans 691–772; sequence SMYHDVIRDI…QEVNNYLKQF (82 aa).

This sequence belongs to the phenylalanyl-tRNA synthetase beta subunit family. Type 1 subfamily. As to quaternary structure, tetramer of two alpha and two beta subunits. Mg(2+) serves as cofactor.

It is found in the cytoplasm. The enzyme catalyses tRNA(Phe) + L-phenylalanine + ATP = L-phenylalanyl-tRNA(Phe) + AMP + diphosphate + H(+). The sequence is that of Phenylalanine--tRNA ligase beta subunit (pheT) from Ureaplasma parvum serovar 3 (strain ATCC 700970).